A 38-amino-acid polypeptide reads, in one-letter code: Photosystem II reaction center protein L (38 aa).

Residues 17 to 37 (SLYWGLLLIFVLAVLFSNYFF) traverse the membrane as a helical segment.

It belongs to the PsbL family. As to quaternary structure, PSII is composed of 1 copy each of membrane proteins PsbA, PsbB, PsbC, PsbD, PsbE, PsbF, PsbH, PsbI, PsbJ, PsbK, PsbL, PsbM, PsbT, PsbX, PsbY, PsbZ, Psb30/Ycf12, at least 3 peripheral proteins of the oxygen-evolving complex and a large number of cofactors. It forms dimeric complexes.

The protein resides in the plastid. The protein localises to the chloroplast thylakoid membrane. In terms of biological role, one of the components of the core complex of photosystem II (PSII). PSII is a light-driven water:plastoquinone oxidoreductase that uses light energy to abstract electrons from H(2)O, generating O(2) and a proton gradient subsequently used for ATP formation. It consists of a core antenna complex that captures photons, and an electron transfer chain that converts photonic excitation into a charge separation. This subunit is found at the monomer-monomer interface and is required for correct PSII assembly and/or dimerization. This is Photosystem II reaction center protein L from Huperzia lucidula (Shining clubmoss).